A 162-amino-acid chain; its full sequence is Cyclic pyranopterin monophosphate synthase (162 aa).

Substrate-binding positions include 79 to 81 (LCH) and 117 to 118 (ME). Residue aspartate 132 is part of the active site.

It belongs to the MoaC family. As to quaternary structure, homohexamer; trimer of dimers.

It carries out the reaction (8S)-3',8-cyclo-7,8-dihydroguanosine 5'-triphosphate = cyclic pyranopterin phosphate + diphosphate. It participates in cofactor biosynthesis; molybdopterin biosynthesis. Catalyzes the conversion of (8S)-3',8-cyclo-7,8-dihydroguanosine 5'-triphosphate to cyclic pyranopterin monophosphate (cPMP). This is Cyclic pyranopterin monophosphate synthase from Bordetella petrii (strain ATCC BAA-461 / DSM 12804 / CCUG 43448).